A 100-amino-acid polypeptide reads, in one-letter code: Aspartyl/glutamyl-tRNA(Asn/Gln) amidotransferase subunit C (100 aa).

The protein belongs to the GatC family. In terms of assembly, heterotrimer of A, B and C subunits.

The enzyme catalyses L-glutamyl-tRNA(Gln) + L-glutamine + ATP + H2O = L-glutaminyl-tRNA(Gln) + L-glutamate + ADP + phosphate + H(+). It catalyses the reaction L-aspartyl-tRNA(Asn) + L-glutamine + ATP + H2O = L-asparaginyl-tRNA(Asn) + L-glutamate + ADP + phosphate + 2 H(+). Allows the formation of correctly charged Asn-tRNA(Asn) or Gln-tRNA(Gln) through the transamidation of misacylated Asp-tRNA(Asn) or Glu-tRNA(Gln) in organisms which lack either or both of asparaginyl-tRNA or glutaminyl-tRNA synthetases. The reaction takes place in the presence of glutamine and ATP through an activated phospho-Asp-tRNA(Asn) or phospho-Glu-tRNA(Gln). The sequence is that of Aspartyl/glutamyl-tRNA(Asn/Gln) amidotransferase subunit C from Streptococcus gordonii (strain Challis / ATCC 35105 / BCRC 15272 / CH1 / DL1 / V288).